Consider the following 948-residue polypeptide: Valine--tRNA ligase (948 aa).

The short motif at 40-50 (PNVTGSLHMGH) is the 'HIGH' region element. A 'KMSKS' region motif is present at residues 551–555 (KMSKS). Lys-554 provides a ligand contact to ATP. Positions 879–945 (LIDKGAELAR…GKLAEQHARI (67 aa)) form a coiled coil.

Belongs to the class-I aminoacyl-tRNA synthetase family. ValS type 1 subfamily. Monomer.

The protein resides in the cytoplasm. It catalyses the reaction tRNA(Val) + L-valine + ATP = L-valyl-tRNA(Val) + AMP + diphosphate. Functionally, catalyzes the attachment of valine to tRNA(Val). As ValRS can inadvertently accommodate and process structurally similar amino acids such as threonine, to avoid such errors, it has a 'posttransfer' editing activity that hydrolyzes mischarged Thr-tRNA(Val) in a tRNA-dependent manner. The sequence is that of Valine--tRNA ligase from Pseudomonas savastanoi pv. phaseolicola (strain 1448A / Race 6) (Pseudomonas syringae pv. phaseolicola (strain 1448A / Race 6)).